Reading from the N-terminus, the 224-residue chain is Enolase-phosphatase E1 (224 aa).

It belongs to the HAD-like hydrolase superfamily. MasA/MtnC family. In terms of assembly, monomer. Mg(2+) is required as a cofactor.

It carries out the reaction 5-methylsulfanyl-2,3-dioxopentyl phosphate + H2O = 1,2-dihydroxy-5-(methylsulfanyl)pent-1-en-3-one + phosphate. It functions in the pathway amino-acid biosynthesis; L-methionine biosynthesis via salvage pathway; L-methionine from S-methyl-5-thio-alpha-D-ribose 1-phosphate: step 3/6. The protein operates within amino-acid biosynthesis; L-methionine biosynthesis via salvage pathway; L-methionine from S-methyl-5-thio-alpha-D-ribose 1-phosphate: step 4/6. Bifunctional enzyme that catalyzes the enolization of 2,3-diketo-5-methylthiopentyl-1-phosphate (DK-MTP-1-P) into the intermediate 2-hydroxy-3-keto-5-methylthiopentenyl-1-phosphate (HK-MTPenyl-1-P), which is then dephosphorylated to form the acireductone 1,2-dihydroxy-3-keto-5-methylthiopentene (DHK-MTPene). The chain is Enolase-phosphatase E1 from Thioalkalivibrio sulfidiphilus (strain HL-EbGR7).